Here is a 211-residue protein sequence, read N- to C-terminus: tRNA (guanine-N(7)-)-methyltransferase (211 aa).

S-adenosyl-L-methionine-binding residues include E44, D69, D96, and D118. Residue D118 is part of the active site. Residue K122 participates in substrate binding. The segment at 124–129 (KHEKRR) is interaction with RNA. Residues D154 and 191 to 194 (TEYE) each bind substrate.

The protein belongs to the class I-like SAM-binding methyltransferase superfamily. TrmB family.

The catalysed reaction is guanosine(46) in tRNA + S-adenosyl-L-methionine = N(7)-methylguanosine(46) in tRNA + S-adenosyl-L-homocysteine. Its pathway is tRNA modification; N(7)-methylguanine-tRNA biosynthesis. Its function is as follows. Catalyzes the formation of N(7)-methylguanine at position 46 (m7G46) in tRNA. This Streptococcus pyogenes serotype M18 (strain MGAS8232) protein is tRNA (guanine-N(7)-)-methyltransferase.